Here is a 285-residue protein sequence, read N- to C-terminus: (3S)-malyl-CoA thioesterase (285 aa).

Substrate contacts are provided by Arg-70 and Glu-122. The Mg(2+) site is built by Glu-122 and Asp-148.

It belongs to the HpcH/HpaI aldolase family. As to quaternary structure, homodimer or homotrimer. The cofactor is Mg(2+).

It catalyses the reaction (S)-malyl-CoA + H2O = (S)-malate + CoA + H(+). Its function is as follows. Catalyzes the hydrolysis of (3S)-malyl-CoA to (3S)-malate and free CoA. Inactive towards beta-methylmalyl-CoA and other CoA esters. The sequence is that of (3S)-malyl-CoA thioesterase from Cereibacter sphaeroides (strain ATCC 17029 / ATH 2.4.9) (Rhodobacter sphaeroides).